The following is a 567-amino-acid chain: D-lactate dehydrogenase [cytochrome], mitochondrial (567 aa).

The transit peptide at 1–56 (MAFASKFARSKTILSFLRPCRQLHSTPKSTGDVTVLSPVKGRRRLPTCWSSSLFPL) directs the protein to the mitochondrion. Residues 142–319 (AVNIPDVVVF…TEITLRLQKI (178 aa)) enclose the FAD-binding PCMH-type domain.

The protein belongs to the FAD-binding oxidoreductase/transferase type 4 family. As to quaternary structure, homodimer. The cofactor is FAD. As to expression, expressed in leaves, stems, flowers and roots.

The protein localises to the mitochondrion. The catalysed reaction is (R)-lactate + 2 Fe(III)-[cytochrome c] = 2 Fe(II)-[cytochrome c] + pyruvate + 2 H(+). With respect to regulation, inhibited by cyanide ions. In terms of biological role, catalyzes the stereospecific oxidation of D-lactate to pyruvate. Involved in the detoxification of methylglyoxal and D-lactate, but probably not involved in the metabolization of glycolate. In Arabidopsis thaliana (Mouse-ear cress), this protein is D-lactate dehydrogenase [cytochrome], mitochondrial.